The primary structure comprises 249 residues: Type III pantothenate kinase (249 aa).

6 to 13 (DCGNSFIK) is a binding site for ATP. Substrate-binding positions include Tyr-93 and 100–103 (GMDR). The active-site Proton acceptor is the Asp-102. K(+) is bound at residue Asp-122. Thr-125 provides a ligand contact to ATP. Thr-181 is a substrate binding site.

Belongs to the type III pantothenate kinase family. In terms of assembly, homodimer. The cofactor is NH4(+). K(+) serves as cofactor.

The protein resides in the cytoplasm. It catalyses the reaction (R)-pantothenate + ATP = (R)-4'-phosphopantothenate + ADP + H(+). The protein operates within cofactor biosynthesis; coenzyme A biosynthesis; CoA from (R)-pantothenate: step 1/5. In terms of biological role, catalyzes the phosphorylation of pantothenate (Pan), the first step in CoA biosynthesis. The sequence is that of Type III pantothenate kinase from Pseudomonas putida (strain ATCC 47054 / DSM 6125 / CFBP 8728 / NCIMB 11950 / KT2440).